The following is a 285-amino-acid chain: Shikimate dehydrogenase (NADP(+)) (285 aa).

Shikimate is bound by residues 21 to 23 and Thr-68; that span reads SRS. The Proton acceptor role is filled by Lys-72. Residue Glu-83 participates in NADP(+) binding. Positions 92 and 107 each coordinate shikimate. NADP(+) contacts are provided by residues 132–136, 156–161, and Leu-221; these read GAGGS and NRTMER. A shikimate-binding site is contributed by Tyr-223. Residue Gly-244 coordinates NADP(+).

Belongs to the shikimate dehydrogenase family. As to quaternary structure, homodimer.

The enzyme catalyses shikimate + NADP(+) = 3-dehydroshikimate + NADPH + H(+). It functions in the pathway metabolic intermediate biosynthesis; chorismate biosynthesis; chorismate from D-erythrose 4-phosphate and phosphoenolpyruvate: step 4/7. Involved in the biosynthesis of the chorismate, which leads to the biosynthesis of aromatic amino acids. Catalyzes the reversible NADPH linked reduction of 3-dehydroshikimate (DHSA) to yield shikimate (SA). This chain is Shikimate dehydrogenase (NADP(+)), found in Nitrobacter hamburgensis (strain DSM 10229 / NCIMB 13809 / X14).